The chain runs to 372 residues: Phospho-N-acetylmuramoyl-pentapeptide-transferase (372 aa).

10 consecutive transmembrane segments (helical) span residues 2–22, 71–91, 98–118, 134–154, 176–196, 211–231, 251–271, 275–295, 300–320, and 349–369; these read LVWL…VSSL, TPTM…LLWA, VWIL…DDWL, YFWL…IATL, MIPF…YFVI, GLAI…AYVS, VIIV…FNAH, VFMG…IAVM, IAFA…MLQV, and QVVA…LMTL.

Belongs to the glycosyltransferase 4 family. MraY subfamily. Requires Mg(2+) as cofactor.

It is found in the cell inner membrane. The enzyme catalyses UDP-N-acetyl-alpha-D-muramoyl-L-alanyl-gamma-D-glutamyl-meso-2,6-diaminopimeloyl-D-alanyl-D-alanine + di-trans,octa-cis-undecaprenyl phosphate = di-trans,octa-cis-undecaprenyl diphospho-N-acetyl-alpha-D-muramoyl-L-alanyl-D-glutamyl-meso-2,6-diaminopimeloyl-D-alanyl-D-alanine + UMP. The protein operates within cell wall biogenesis; peptidoglycan biosynthesis. Catalyzes the initial step of the lipid cycle reactions in the biosynthesis of the cell wall peptidoglycan: transfers peptidoglycan precursor phospho-MurNAc-pentapeptide from UDP-MurNAc-pentapeptide onto the lipid carrier undecaprenyl phosphate, yielding undecaprenyl-pyrophosphoryl-MurNAc-pentapeptide, known as lipid I. This chain is Phospho-N-acetylmuramoyl-pentapeptide-transferase, found in Psychrobacter cryohalolentis (strain ATCC BAA-1226 / DSM 17306 / VKM B-2378 / K5).